The chain runs to 365 residues: Flagellar P-ring protein (365 aa).

The N-terminal stretch at 1–19 is a signal peptide; that stretch reads MIKFLSALILLLVITAAQA.

Belongs to the FlgI family. The basal body constitutes a major portion of the flagellar organelle and consists of four rings (L,P,S, and M) mounted on a central rod.

It is found in the periplasm. It localises to the bacterial flagellum basal body. Functionally, assembles around the rod to form the L-ring and probably protects the motor/basal body from shearing forces during rotation. The polypeptide is Flagellar P-ring protein (Escherichia coli O81 (strain ED1a)).